The primary structure comprises 868 residues: DNA topoisomerase 1 (868 aa).

The region spanning 3–148 (KSLVIVESPA…RFSRVVFNEI (146 aa)) is the Toprim domain. E9 and D117 together coordinate Mg(2+). The 418-residue stretch at 164-581 (NLDRVNAQQT…QFFKDFSQQL (418 aa)) folds into the Topo IA-type catalytic domain. Residues 198–203 (SAGRVQ) form an interaction with DNA region. The O-(5'-phospho-DNA)-tyrosine intermediate role is filled by Y325. C4-type zinc fingers lie at residues 605-636 (CPTC…KERC), 667-694 (CPKC…NPNC), and 716-739 (CDKC…CTSC).

This sequence belongs to the type IA topoisomerase family. Monomer. Mg(2+) is required as a cofactor.

The enzyme catalyses ATP-independent breakage of single-stranded DNA, followed by passage and rejoining.. Releases the supercoiling and torsional tension of DNA, which is introduced during the DNA replication and transcription, by transiently cleaving and rejoining one strand of the DNA duplex. Introduces a single-strand break via transesterification at a target site in duplex DNA. The scissile phosphodiester is attacked by the catalytic tyrosine of the enzyme, resulting in the formation of a DNA-(5'-phosphotyrosyl)-enzyme intermediate and the expulsion of a 3'-OH DNA strand. The free DNA strand then undergoes passage around the unbroken strand, thus removing DNA supercoils. Finally, in the religation step, the DNA 3'-OH attacks the covalent intermediate to expel the active-site tyrosine and restore the DNA phosphodiester backbone. The chain is DNA topoisomerase 1 from Pasteurella multocida (strain Pm70).